The chain runs to 113 residues: MPKVIFLPNEDFCPEGMVVDAATGDNLLEVAHNAGVEIHHACDGSCACTTCHVIVREGFDSLNETSDQEEDMLDKAWGLEMDSRLSCQCVVGNEDLVVEIPKYNLNHANEAAH.

Residues 2-104 (PKVIFLPNED…DLVVEIPKYN (103 aa)) enclose the 2Fe-2S ferredoxin-type domain. [2Fe-2S] cluster contacts are provided by C42, C48, C51, and C87.

This sequence belongs to the adrenodoxin/putidaredoxin family. [2Fe-2S] cluster is required as a cofactor.

Ferredoxin are iron-sulfur proteins that transfer electrons in a wide variety of metabolic reactions. This Haemophilus influenzae (strain ATCC 51907 / DSM 11121 / KW20 / Rd) protein is 2Fe-2S ferredoxin (fdx).